A 380-amino-acid polypeptide reads, in one-letter code: Acyl-lipid (9+3)-(E)-desaturase (380 aa).

Positions 1–25 are disordered; it reads MGAGGCISVSETKPNQKNSLERAPY. A compositionally biased stretch (polar residues) spans 9–18; the sequence is VSETKPNQKN. A run of 2 helical transmembrane segments spans residues 52–72 and 81–101; these read LSYVASDLTVAFLLYHATTYF and ALAWLAYWVAQGCVLTGVWVI. Positions 103–107 match the Histidine box-1 motif; sequence HECGH. Residues 139 to 143 carry the Histidine box-2 motif; sequence HRRHH. A run of 3 helical transmembrane segments spans residues 177 to 197, 223 to 243, and 247 to 267; these read IGVLFITLTLGWPLYLTFNVS, IYLSDIGIVITSLVLLRAAMV, and VWLICVYGVPLMITNGFLVLV. Residues 313 to 317 carry the Histidine box-3 motif; sequence HIVHH.

Belongs to the fatty acid desaturase type 1 family.

It localises to the membrane. The catalysed reaction is a (9Z)-octadecenoyl-containing glycerolipid + 2 Fe(II)-[cytochrome b5] + O2 + 2 H(+) = a (9Z,12E)-octadecadienoyl-containing glycerolipid + 2 Fe(III)-[cytochrome b5] + 2 H2O. The enzyme catalyses a (9Z)-hexadecenoyl-containing glycerolipid + 2 Fe(II)-[cytochrome b5] + O2 + 2 H(+) = a (9Z,12E)-hexadecadienoyl-containing glycerolipid + 2 Fe(III)-[cytochrome b5] + 2 H2O. In terms of biological role, involved in the biosynthesis of dimorphecolic acid (9-OH-18:2(10E,12E)). Converts oleic acid (18:1(9Z)) into 18:2(9Z,12E) and probably palmitoleic acid (16:1(9Z)) into 16:2(9Z,12E). Very limited ability to catalyze (Z)-delta(12) desaturation. In Dimorphotheca sinuata (African daisy), this protein is Acyl-lipid (9+3)-(E)-desaturase.